Reading from the N-terminus, the 187-residue chain is ATP synthase subunit delta, chloroplastic (187 aa).

Belongs to the ATPase delta chain family. In terms of assembly, F-type ATPases have 2 components, F(1) - the catalytic core - and F(0) - the membrane proton channel. F(1) has five subunits: alpha(3), beta(3), gamma(1), delta(1), epsilon(1). CF(0) has four main subunits: a(1), b(1), b'(1) and c(10-14). The alpha and beta chains form an alternating ring which encloses part of the gamma chain. F(1) is attached to F(0) by a central stalk formed by the gamma and epsilon chains, while a peripheral stalk is formed by the delta, b and b' chains.

It localises to the plastid. It is found in the chloroplast thylakoid membrane. Functionally, f(1)F(0) ATP synthase produces ATP from ADP in the presence of a proton or sodium gradient. F-type ATPases consist of two structural domains, F(1) containing the extramembraneous catalytic core and F(0) containing the membrane proton channel, linked together by a central stalk and a peripheral stalk. During catalysis, ATP synthesis in the catalytic domain of F(1) is coupled via a rotary mechanism of the central stalk subunits to proton translocation. Its function is as follows. This protein is part of the stalk that links CF(0) to CF(1). It either transmits conformational changes from CF(0) to CF(1) or is implicated in proton conduction. The sequence is that of ATP synthase subunit delta, chloroplastic from Trieres chinensis (Marine centric diatom).